We begin with the raw amino-acid sequence, 521 residues long: SET and MYND domain-containing protein DDB_G0292140 (521 aa).

The disordered stretch occupies residues 1-101 (MDGVIESPSN…KIKKSKKSIK (101 aa)). The segment covering 12–55 (TIKISPSTSDSSTTTPIITTPPTQSTATVTTKAAATTTTTEAST) has biased composition (low complexity). Residues 56–65 (TPPPPQPTPT) show a composition bias toward pro residues. Low complexity predominate over residues 66 to 90 (PTQSTATVTKEVETTTETIPPIVTK). Residues 91 to 101 (GKIKKSKKSIK) are compositionally biased toward basic residues. Residues 122 to 406 (WPIHVYSHPI…EGDELTISYI (285 aa)) form the SET domain. Residues Cys-167, Cys-170, Cys-188, Cys-191, Cys-197, Cys-201, His-209, and Cys-213 each coordinate Zn(2+). The segment at 167 to 213 (CQHCFLEVPLNQQILPTDFYMCEGCQRVGYCSANCRCIDYSQHRFEC) adopts an MYND-type zinc-finger fold. The tract at residues 442 to 521 (QTGTLEKDDD…QDHQNNDKSN (80 aa)) is disordered. Positions 448–469 (KDDDDNDDEKEKMDEDDDEKDD) are enriched in acidic residues. Residues 470–485 (DINNKNDKKSKYKSDG) show a composition bias toward basic and acidic residues. Acidic residues predominate over residues 486-495 (STDDEEDEDN). Residues 497–514 (NNKNNNKNKNNNSNNQDH) are compositionally biased toward low complexity.

Belongs to the class V-like SAM-binding methyltransferase superfamily.

Probable methyltransferase. This chain is SET and MYND domain-containing protein DDB_G0292140, found in Dictyostelium discoideum (Social amoeba).